Consider the following 281-residue polypeptide: Fructose-bisphosphate aldolase class 1 (281 aa).

Lys191 serves as the catalytic Schiff-base intermediate with dihydroxyacetone-P.

It belongs to the DeoC/FbaB aldolase family. Homooctamer.

It is found in the cytoplasm. It localises to the chromosome. It catalyses the reaction beta-D-fructose 1,6-bisphosphate = D-glyceraldehyde 3-phosphate + dihydroxyacetone phosphate. Activated by citrate. This Thermococcus kodakarensis (strain ATCC BAA-918 / JCM 12380 / KOD1) (Pyrococcus kodakaraensis (strain KOD1)) protein is Fructose-bisphosphate aldolase class 1 (fba).